A 441-amino-acid chain; its full sequence is Serine hydroxymethyltransferase (441 aa).

(6S)-5,6,7,8-tetrahydrofolate contacts are provided by residues L119 and 123–125; that span reads GHL. K228 carries the post-translational modification N6-(pyridoxal phosphate)lysine. Residue 370-372 coordinates (6S)-5,6,7,8-tetrahydrofolate; that stretch reads SPF.

It belongs to the SHMT family. As to quaternary structure, homodimer. Pyridoxal 5'-phosphate serves as cofactor.

The protein localises to the cytoplasm. It carries out the reaction (6R)-5,10-methylene-5,6,7,8-tetrahydrofolate + glycine + H2O = (6S)-5,6,7,8-tetrahydrofolate + L-serine. The protein operates within one-carbon metabolism; tetrahydrofolate interconversion. Its pathway is amino-acid biosynthesis; glycine biosynthesis; glycine from L-serine: step 1/1. In terms of biological role, catalyzes the reversible interconversion of serine and glycine with tetrahydrofolate (THF) serving as the one-carbon carrier. This reaction serves as the major source of one-carbon groups required for the biosynthesis of purines, thymidylate, methionine, and other important biomolecules. Also exhibits THF-independent aldolase activity toward beta-hydroxyamino acids, producing glycine and aldehydes, via a retro-aldol mechanism. In Chlorobium phaeovibrioides (strain DSM 265 / 1930) (Prosthecochloris vibrioformis (strain DSM 265)), this protein is Serine hydroxymethyltransferase.